The chain runs to 768 residues: Levansucrase (768 aa).

Positions 1–36 (MLENKKHKKMSLSGKSLLMGTLSTAAIVLSASTVNA) are cleaved as a signal peptide. Composition is skewed to polar residues over residues 57–68 (SASVNKNDNSGL), 80–99 (TETN…SQVN), 106–134 (SSTQ…QDSD), and 143–153 (NNSQGQSSTSS). Residues 57-158 (SASVNKNDNS…SSTSSEKTEL (102 aa)) form a disordered region. Sucrose is bound by residues tryptophan 250, aspartate 251, and serine 320. The Nucleophile role is filled by aspartate 251. Residue aspartate 398 coordinates Ca(2+). Sucrose-binding residues include arginine 403 and aspartate 404. Ca(2+) contacts are provided by glutamine 429, asparagine 468, and aspartate 502. Residue glutamate 503 participates in sucrose binding. Glutamate 505 serves as the catalytic Proton donor/acceptor. Arginine 523 contributes to the sucrose binding site. Positions 688–736 (HQPVTPNVPTTPEKPENPTTPNTPDTPRTPEVPTTPVKKTTQSELPKAG) are disordered. Residues 691–727 (VTPNVPTTPEKPENPTTPNTPDTPRTPEVPTTPVKKT) are compositionally biased toward low complexity. Positions 732-736 (LPKAG) match the LPXTG sorting signal motif. Residue alanine 735 is modified to Pentaglycyl murein peptidoglycan amidated alanine. The propeptide at 736–768 (GAKDGIAATILGAISSMLGVIGLAGISKRKRNN) is removed by sortase.

This sequence belongs to the glycosyl hydrolase 68 family.

The protein localises to the secreted. It is found in the cell wall. It localises to the cell surface. It catalyses the reaction [6)-beta-D-fructofuranosyl-(2-&gt;](n) alpha-D-glucopyranoside + sucrose = [6)-beta-D-fructofuranosyl-(2-&gt;](n+1) alpha-D-glucopyranoside + D-glucose. Its activity is regulated as follows. Calcium ions are required for optimal activity, but do not seem to be essential since addition of EDTA causes only a 48% drop in activity. Ca(2+) may play an important structural role and promote stability of levansucrase. Functionally, fructosyltransferase that catalyzes the polymerization of the fructose moiety of sucrose to produce levan polymer and the fructo-oligosaccharide (FOS) 1-kestose. Is also able to convert raffinose into a fructan polymer and a single oligosaccharide (most likely Gal-Glc-Frc-Frc) in vitro; however, L.gasseri strain DSM 20077 is unable to ferment raffinose. Also displays sucrose hydrolase activity. This Lactobacillus gasseri protein is Levansucrase.